Here is a 127-residue protein sequence, read N- to C-terminus: Large ribosomal subunit protein bL19 (127 aa).

Belongs to the bacterial ribosomal protein bL19 family.

Its function is as follows. This protein is located at the 30S-50S ribosomal subunit interface and may play a role in the structure and function of the aminoacyl-tRNA binding site. The protein is Large ribosomal subunit protein bL19 of Ruegeria pomeroyi (strain ATCC 700808 / DSM 15171 / DSS-3) (Silicibacter pomeroyi).